Consider the following 89-residue polypeptide: MVDTILRIATRQSPLALWQAHFVQQRLEACHPGLRVELVPMVTRGXLLLDTPLAKVGGKGLFVKELELALLENRADIAVHSMKDVPVEF.

This sequence belongs to the HMBS family. Monomer. Dipyrromethane serves as cofactor.

The enzyme catalyses 4 porphobilinogen + H2O = hydroxymethylbilane + 4 NH4(+). It functions in the pathway porphyrin-containing compound metabolism; protoporphyrin-IX biosynthesis; coproporphyrinogen-III from 5-aminolevulinate: step 2/4. Functionally, tetrapolymerization of the monopyrrole PBG into the hydroxymethylbilane pre-uroporphyrinogen in several discrete steps. The polypeptide is Porphobilinogen deaminase (hemC) (Dickeya chrysanthemi (Pectobacterium chrysanthemi)).